The chain runs to 306 residues: Ornithine carbamoyltransferase (306 aa).

Carbamoyl phosphate contacts are provided by residues 51–54 (STRT), glutamine 78, arginine 102, and 129–132 (HPVQ). Residues asparagine 159, aspartate 223, and 227 to 228 (SM) contribute to the L-ornithine site. Residues 263–264 (CL) and arginine 291 each bind carbamoyl phosphate.

It belongs to the aspartate/ornithine carbamoyltransferase superfamily. OTCase family.

The protein localises to the cytoplasm. The enzyme catalyses carbamoyl phosphate + L-ornithine = L-citrulline + phosphate + H(+). It functions in the pathway amino-acid biosynthesis; L-arginine biosynthesis; L-arginine from L-ornithine and carbamoyl phosphate: step 1/3. Reversibly catalyzes the transfer of the carbamoyl group from carbamoyl phosphate (CP) to the N(epsilon) atom of ornithine (ORN) to produce L-citrulline. In Sulfurovum sp. (strain NBC37-1), this protein is Ornithine carbamoyltransferase.